The chain runs to 348 residues: UPF0283 membrane protein PMI1371 (348 aa).

2 consecutive transmembrane segments (helical) span residues 69–89 (LITVASTILGVSVIAQAGQWI) and 99–119 (IALGAASAGGLIVIAGMGSVI).

Belongs to the UPF0283 family.

It localises to the cell inner membrane. This is UPF0283 membrane protein PMI1371 from Proteus mirabilis (strain HI4320).